Reading from the N-terminus, the 660-residue chain is Acetyl-coenzyme A synthetase (660 aa).

Residues 197–200 and threonine 317 each bind CoA; that span reads RGGK. ATP-binding positions include 397 to 399, 421 to 426, aspartate 512, and arginine 528; these read GEP and DTFWQT. Serine 536 contacts CoA. An ATP-binding site is contributed by arginine 539. Mg(2+) is bound by residues valine 550 and valine 555. The residue at position 625 (lysine 625) is an N6-acetyllysine.

Belongs to the ATP-dependent AMP-binding enzyme family. The cofactor is Mg(2+). In terms of processing, acetylated. Deacetylation by the SIR2-homolog deacetylase activates the enzyme.

It carries out the reaction acetate + ATP + CoA = acetyl-CoA + AMP + diphosphate. Its function is as follows. Catalyzes the conversion of acetate into acetyl-CoA (AcCoA), an essential intermediate at the junction of anabolic and catabolic pathways. AcsA undergoes a two-step reaction. In the first half reaction, AcsA combines acetate with ATP to form acetyl-adenylate (AcAMP) intermediate. In the second half reaction, it can then transfer the acetyl group from AcAMP to the sulfhydryl group of CoA, forming the product AcCoA. This is Acetyl-coenzyme A synthetase from Ralstonia nicotianae (strain ATCC BAA-1114 / GMI1000) (Ralstonia solanacearum).